Consider the following 82-residue polypeptide: Cyclin-dependent kinases regulatory subunit (82 aa).

This sequence belongs to the CKS family. Forms a homohexamer that can probably bind six kinase subunits.

Its function is as follows. Binds to the catalytic subunit of the cyclin dependent kinases and is essential for their biological function. In Dictyostelium discoideum (Social amoeba), this protein is Cyclin-dependent kinases regulatory subunit (cks1).